The primary structure comprises 286 residues: MSFNKVPNIPGAPALSALLKVSVIGGLGVYALTNSLYNVDGGHRAVMFNRLTGIKEKVYPEGTHFMVPWFERPIIYDVRARPYLVESTTGSHDLQMVKIGLRVLTRPMGDRLPQIYRTLGENYSERVLPSIIHETLKAVVAQYNASQLITQREAVSREIRKILTERASNFDIALDDVSITTLTFGKEFTAAIEAKQVAAQEAERAKFIVEKAEQDRRSAVIRAQGEAKSAQLIGQAIANNQAFITLRKIEAAREIAQTIAQSANKVYLSSNDLLLNLQEMNLEPKK.

The Mitochondrial matrix segment spans residues 1–13 (MSFNKVPNIPGAP). The helical; Signal-anchor for type II membrane protein transmembrane segment at 14–32 (ALSALLKVSVIGGLGVYAL) threads the bilayer. Topologically, residues 33–286 (TNSLYNVDGG…LQEMNLEPKK (254 aa)) are mitochondrial intermembrane. Residues 186-219 (KEFTAAIEAKQVAAQEAERAKFIVEKAEQDRRSA) are a coiled coil.

The protein belongs to the prohibitin family. As to quaternary structure, component of a prohibitin multimeric complex in mitochondrial membranes. In terms of tissue distribution, mostly expressed in proliferative tissues, including vasculature, shoot and root apical tissues.

It localises to the mitochondrion inner membrane. Its function is as follows. Prohibitin probably acts as a holdase/unfoldase for the stabilization of newly synthesized mitochondrial proteins. The sequence is that of Prohibitin-2, mitochondrial (PHB2) from Arabidopsis thaliana (Mouse-ear cress).